A 420-amino-acid polypeptide reads, in one-letter code: Putative RNA-binding protein Alsin2 (420 aa).

A coiled-coil region spans residues 99–130 (IADCDRRTDSAKQRLKETQEELTAEVAEKANA). Basic and acidic residues-rich tracts occupy residues 242–259 (AELK…EGRG), 282–363 (RERQ…RFGD), and 373–399 (HHRD…HFRD). The disordered stretch occupies residues 242 to 420 (AELKRTGKMT…SYSRERNYRR (179 aa)).

This sequence belongs to the Luc7 family. As to quaternary structure, interacts with x16 (via Arg/Ser-rich region).

Functionally, may bind to RNA via its Arg/Ser-rich domain. The polypeptide is Putative RNA-binding protein Alsin2 (Drosophila melanogaster (Fruit fly)).